The chain runs to 402 residues: D-mannonate dehydratase (402 aa).

Substrate-binding residues include asparagine 37 and histidine 122. The active-site Proton donor/acceptor is tyrosine 159. Aspartate 210 contacts Mg(2+). Catalysis depends on histidine 212, which acts as the Proton donor/acceptor. Mg(2+)-binding residues include glutamate 236 and glutamate 262. Glutamate 262, arginine 283, histidine 312, aspartate 316, and glutamate 339 together coordinate substrate.

It belongs to the mandelate racemase/muconate lactonizing enzyme family. GalD subfamily. Homotetramer. The cofactor is Mg(2+).

It catalyses the reaction D-mannonate = 2-dehydro-3-deoxy-D-gluconate + H2O. It participates in carbohydrate metabolism; pentose and glucuronate interconversion. Its function is as follows. Catalyzes the dehydration of D-mannonate. Has no detectable activity with a panel of 70 other acid sugars (in vitro). This Novosphingobium aromaticivorans (strain ATCC 700278 / DSM 12444 / CCUG 56034 / CIP 105152 / NBRC 16084 / F199) protein is D-mannonate dehydratase (manD).